Reading from the N-terminus, the 721-residue chain is Glycine--tRNA ligase beta subunit (721 aa).

The protein belongs to the class-II aminoacyl-tRNA synthetase family. As to quaternary structure, tetramer of two alpha and two beta subunits.

It is found in the cytoplasm. The enzyme catalyses tRNA(Gly) + glycine + ATP = glycyl-tRNA(Gly) + AMP + diphosphate. The protein is Glycine--tRNA ligase beta subunit of Sinorhizobium fredii (strain NBRC 101917 / NGR234).